A 119-amino-acid chain; its full sequence is Large ribosomal subunit protein uL18 (119 aa).

The tract at residues 1–23 (MISKPDKNKTRQRRHARVRGKIS) is disordered. The span at 10–20 (TRQRRHARVRG) shows a compositional bias: basic residues.

Belongs to the universal ribosomal protein uL18 family. Part of the 50S ribosomal subunit; part of the 5S rRNA/L5/L18/L25 subcomplex. Contacts the 5S and 23S rRNAs.

Its function is as follows. This is one of the proteins that bind and probably mediate the attachment of the 5S RNA into the large ribosomal subunit, where it forms part of the central protuberance. This is Large ribosomal subunit protein uL18 from Lacticaseibacillus casei (strain BL23) (Lactobacillus casei).